The sequence spans 77 residues: Putative membrane protein insertion efficiency factor (77 aa).

The protein belongs to the UPF0161 family.

Its subcellular location is the cell membrane. Functionally, could be involved in insertion of integral membrane proteins into the membrane. This is Putative membrane protein insertion efficiency factor from Geobacillus sp. (strain WCH70).